A 473-amino-acid polypeptide reads, in one-letter code: Photosystem II CP43 reaction center protein (473 aa).

The propeptide occupies 1-14 (MKTLYSLRRFYHVE). Threonine 15 bears the N-acetylthreonine mark. Position 15 is a phosphothreonine (threonine 15). Helical transmembrane passes span 69-93 (LFEV…PHLA), 134-155 (LIGP…KDKN), 178-200 (KACY…RIIT), 255-275 (KPWA…LSYS), and 291-312 (WFNN…ASQA). Glutamate 367 is a [CaMn4O5] cluster binding site. The chain crosses the membrane as a helical span at residues 447–471 (RARAAAAGFEKGIERETEPVLFMKP).

It belongs to the PsbB/PsbC family. PsbC subfamily. In terms of assembly, PSII is composed of 1 copy each of membrane proteins PsbA, PsbB, PsbC, PsbD, PsbE, PsbF, PsbH, PsbI, PsbJ, PsbK, PsbL, PsbM, PsbT, PsbX, PsbY, PsbZ, Psb30/Ycf12, at least 3 peripheral proteins of the oxygen-evolving complex and a large number of cofactors. It forms dimeric complexes. It depends on Binds multiple chlorophylls and provides some of the ligands for the Ca-4Mn-5O cluster of the oxygen-evolving complex. It may also provide a ligand for a Cl- that is required for oxygen evolution. PSII binds additional chlorophylls, carotenoids and specific lipids. as a cofactor.

It localises to the plastid. It is found in the chloroplast thylakoid membrane. One of the components of the core complex of photosystem II (PSII). It binds chlorophyll and helps catalyze the primary light-induced photochemical processes of PSII. PSII is a light-driven water:plastoquinone oxidoreductase, using light energy to abstract electrons from H(2)O, generating O(2) and a proton gradient subsequently used for ATP formation. The chain is Photosystem II CP43 reaction center protein from Mesostigma viride (Green alga).